A 160-amino-acid chain; its full sequence is Cytochrome b6-f complex subunit 4 (160 aa).

Transmembrane regions (helical) follow at residues Leu-36–Val-56, Leu-95–Glu-115, and Ile-131–Ile-151.

It belongs to the cytochrome b family. PetD subfamily. The 4 large subunits of the cytochrome b6-f complex are cytochrome b6, subunit IV (17 kDa polypeptide, petD), cytochrome f and the Rieske protein, while the 4 small subunits are petG, petL, petM and petN. The complex functions as a dimer. The N-terminus is blocked.

It localises to the plastid. It is found in the chloroplast thylakoid membrane. Component of the cytochrome b6-f complex, which mediates electron transfer between photosystem II (PSII) and photosystem I (PSI), cyclic electron flow around PSI, and state transitions. The polypeptide is Cytochrome b6-f complex subunit 4 (Chlamydomonas reinhardtii (Chlamydomonas smithii)).